The following is a 976-amino-acid chain: R3H domain-containing protein 2 (976 aa).

2 disordered regions span residues 32–71 (ISKTPSKEEIEKECEDTSLRQETQRRTSNHGHARKRAKSN) and 105–147 (ISCP…QEYT). Positions 36–56 (PSKEEIEKECEDTSLRQETQR) are enriched in basic and acidic residues. The residue at position 37 (serine 37) is a Phosphoserine. Over residues 58–71 (TSNHGHARKRAKSN) the composition is skewed to basic residues. A compositionally biased stretch (basic and acidic residues) spans 109–143 (SDKEEEKSTKDVSEKEDKDKNKEKIPRKMLSRDSS). A Phosphoserine modification is found at serine 143. In terms of domain architecture, R3H spans 169–232 (RMMLLKLEQE…AVIINKTSNT (64 aa)). The SUZ domain maps to 233-310 (RIPEQRFSEH…NREGLSRTSS (78 aa)). Basic and acidic residues predominate over residues 257–269 (LKRDDASMDRDDN). 5 disordered regions span residues 257 to 376 (LKRD…ISRP), 401 to 457 (CTAQ…EAAD), 480 to 560 (ASTG…PGLQ), 661 to 725 (GTSP…PSMV), and 738 to 780 (RGQK…SLSS). Residues 306-317 (SRTSSSRQSSTD) are compositionally biased toward low complexity. 3 positions are modified to phosphoserine: serine 330, serine 333, and serine 349. Residues 401–415 (CTAQQQQQQQQQQLP) show a composition bias toward low complexity. Composition is skewed to polar residues over residues 441–453 (PFGQMSLSRQGST) and 480–504 (ASTGQPLPTSNYSTSSHAPPTQQVL). The span at 543–560 (SPQRGQQLPQPSQQPGLQ) shows a compositional bias: low complexity. Residues 682–691 (SPSPCSPPQM) are compositionally biased toward pro residues. The segment covering 692–714 (PQQYSGVSPSGPGVVVMQLNVPN) has biased composition (low complexity). Over residues 748–758 (PDSSPQANTQM) the composition is skewed to polar residues. Positions 759-777 (SSSPVTSPTQSPAPSPVTS) are enriched in low complexity. Phosphoserine is present on residues serine 853 and serine 855. A phosphothreonine mark is found at threonine 856 and threonine 860.

The protein resides in the nucleus. The polypeptide is R3H domain-containing protein 2 (R3HDM2) (Homo sapiens (Human)).